Here is a 1049-residue protein sequence, read N- to C-terminus: Multiple C2 domain and transmembrane region protein 16 (1049 aa).

In terms of domain architecture, C2 1 spans 1 to 112; sequence MATTRKLVVE…VGQGEEALIY (112 aa). A disordered region spans residues 136 to 249; that stretch reads DEKPPPLKPT…PPQNQPDGED (114 aa). 2 stretches are compositionally biased toward basic and acidic residues: residues 153–170 and 226–238; these read VEEK…ESKP and ESDK…KPVE. C2 domains lie at 302–426, 460–582, and 617–745; these read TSEI…PQWY, TAGN…SRWL, and VCSD…RNTY. 4 residues coordinate Ca(2+): serine 338, aspartate 390, threonine 393, and serine 398. 2 helical membrane-spanning segments follow: residues 883-903 and 989-1009; these read VMLI…LFVI and ATGI…LVPT.

It belongs to the MCTP family. Ca(2+) serves as cofactor. In terms of tissue distribution, expressed in the vascular tissues of roots, cotyledons and rosette leaves. Accumulates in roots meristems and shoot apical meristems (SAMs). Observed in flowers.

It localises to the endoplasmic reticulum membrane. In terms of biological role, may function as a signaling molecule by regulating the trafficking of other regulators. In Arabidopsis thaliana (Mouse-ear cress), this protein is Multiple C2 domain and transmembrane region protein 16.